The following is a 314-amino-acid chain: Ribosomal RNA small subunit methyltransferase H (314 aa).

Residues 35-37 (GGH), Asp-55, Phe-79, Asp-101, and Gln-108 each bind S-adenosyl-L-methionine.

This sequence belongs to the methyltransferase superfamily. RsmH family.

The protein resides in the cytoplasm. The enzyme catalyses cytidine(1402) in 16S rRNA + S-adenosyl-L-methionine = N(4)-methylcytidine(1402) in 16S rRNA + S-adenosyl-L-homocysteine + H(+). Specifically methylates the N4 position of cytidine in position 1402 (C1402) of 16S rRNA. This Pectobacterium carotovorum subsp. carotovorum (strain PC1) protein is Ribosomal RNA small subunit methyltransferase H.